Reading from the N-terminus, the 62-residue chain is UPF0434 protein NGR_c31900 (62 aa).

The protein belongs to the UPF0434 family.

This chain is UPF0434 protein NGR_c31900, found in Sinorhizobium fredii (strain NBRC 101917 / NGR234).